We begin with the raw amino-acid sequence, 638 residues long: 1-deoxy-D-xylulose-5-phosphate synthase (638 aa).

Thiamine diphosphate is bound by residues histidine 75 and 116–118 (AHS). Aspartate 147 contributes to the Mg(2+) binding site. Thiamine diphosphate contacts are provided by residues 148-149 (GA), asparagine 177, tyrosine 288, and glutamate 370. Asparagine 177 lines the Mg(2+) pocket.

This sequence belongs to the transketolase family. DXPS subfamily. As to quaternary structure, homodimer. Mg(2+) serves as cofactor. It depends on thiamine diphosphate as a cofactor.

It catalyses the reaction D-glyceraldehyde 3-phosphate + pyruvate + H(+) = 1-deoxy-D-xylulose 5-phosphate + CO2. Its pathway is metabolic intermediate biosynthesis; 1-deoxy-D-xylulose 5-phosphate biosynthesis; 1-deoxy-D-xylulose 5-phosphate from D-glyceraldehyde 3-phosphate and pyruvate: step 1/1. Functionally, catalyzes the acyloin condensation reaction between C atoms 2 and 3 of pyruvate and glyceraldehyde 3-phosphate to yield 1-deoxy-D-xylulose-5-phosphate (DXP). The chain is 1-deoxy-D-xylulose-5-phosphate synthase from Cupriavidus taiwanensis (strain DSM 17343 / BCRC 17206 / CCUG 44338 / CIP 107171 / LMG 19424 / R1) (Ralstonia taiwanensis (strain LMG 19424)).